A 491-amino-acid polypeptide reads, in one-letter code: Argininosuccinate lyase (491 aa).

The protein belongs to the lyase 1 family. Argininosuccinate lyase subfamily.

The protein resides in the cytoplasm. The enzyme catalyses 2-(N(omega)-L-arginino)succinate = fumarate + L-arginine. It participates in amino-acid biosynthesis; L-arginine biosynthesis; L-arginine from L-ornithine and carbamoyl phosphate: step 3/3. This chain is Argininosuccinate lyase, found in Methanococcoides burtonii (strain DSM 6242 / NBRC 107633 / OCM 468 / ACE-M).